We begin with the raw amino-acid sequence, 150 residues long: METVFDINEIMKILPHRYPFLLVDRIVEYVAGERIVGIKNVSINEPFFQGHFPGHPVMPGVLIVEAMAQVGGIYAYVTLGDEVRDKVCYFASIDNVKFRKPVVPGDQLRIEVTISGCKRGIWCFSARATVNGKLVTEAELKATFADKEKL.

His51 is a catalytic residue.

The protein belongs to the thioester dehydratase family. FabZ subfamily.

It localises to the cytoplasm. It catalyses the reaction a (3R)-hydroxyacyl-[ACP] = a (2E)-enoyl-[ACP] + H2O. Involved in unsaturated fatty acids biosynthesis. Catalyzes the dehydration of short chain beta-hydroxyacyl-ACPs and long chain saturated and unsaturated beta-hydroxyacyl-ACPs. The protein is 3-hydroxyacyl-[acyl-carrier-protein] dehydratase FabZ of Geobacter sulfurreducens (strain ATCC 51573 / DSM 12127 / PCA).